The following is a 416-amino-acid chain: Formyl-CoA:oxalate CoA-transferase (416 aa).

CoA is bound by residues 17-18 (QS), Arg-38, 72-75 (LNTK), 96-98 (NFH), His-104, and 137-140 (KAYE). Asp-169 serves as the catalytic Nucleophile. Residue 248–250 (GGQ) coordinates substrate. Position 273 to 275 (273 to 275 (QEQ)) interacts with CoA.

This sequence belongs to the CoA-transferase III family. Frc subfamily. As to quaternary structure, homodimer.

The catalysed reaction is formyl-CoA + oxalate = oxalyl-CoA + formate. It functions in the pathway metabolic intermediate degradation; oxalate degradation; CO(2) and formate from oxalate: step 1/2. Its function is as follows. Involved in the catabolism of oxalate and in the adapatation to low pH via the induction of the oxalate-dependent acid tolerance response (ATR). Catalyzes the transfer of the CoA moiety from formyl-CoA to oxalate. The protein is Formyl-CoA:oxalate CoA-transferase of Escherichia coli O17:K52:H18 (strain UMN026 / ExPEC).